We begin with the raw amino-acid sequence, 132 residues long: Fatty acid-binding protein 9 (132 aa).

4 positions are modified to phosphoserine: Ser-13, Ser-14, Ser-44, and Ser-91.

The protein belongs to the calycin superfamily. Fatty-acid binding protein (FABP) family.

It is found in the cytoplasm. The chain is Fatty acid-binding protein 9 (FABP9) from Homo sapiens (Human).